The following is a 224-amino-acid chain: Octanoyltransferase (224 aa).

Residues 38–213 form the BPL/LPL catalytic domain; that stretch reads SATVDELWWV…YLVRRLGYSA (176 aa). Substrate-binding positions include 77–84, 144–146, and 157–159; these read RGGQVTYH, SLG, and GLS. The active-site Acyl-thioester intermediate is the C175.

Belongs to the LipB family.

Its subcellular location is the cytoplasm. It carries out the reaction octanoyl-[ACP] + L-lysyl-[protein] = N(6)-octanoyl-L-lysyl-[protein] + holo-[ACP] + H(+). Its pathway is protein modification; protein lipoylation via endogenous pathway; protein N(6)-(lipoyl)lysine from octanoyl-[acyl-carrier-protein]: step 1/2. Catalyzes the transfer of endogenously produced octanoic acid from octanoyl-acyl-carrier-protein onto the lipoyl domains of lipoate-dependent enzymes. Lipoyl-ACP can also act as a substrate although octanoyl-ACP is likely to be the physiological substrate. This is Octanoyltransferase from Nitrosococcus oceani (strain ATCC 19707 / BCRC 17464 / JCM 30415 / NCIMB 11848 / C-107).